The primary structure comprises 554 residues: Trichloroethene reductive dehalogenase (554 aa).

Positions 1 to 42 (MSEKYHSTVTRRDFMKRLGLAGAGAGALGAAVLAENNLPHEF) form a signal peptide, tat-type signal. 2 consecutive 4Fe-4S ferredoxin-type domains span residues 425–457 (PTKPIDAGIREFCKTCGICAEHCPTQAISHEGP) and 471–500 (EGWHLDYHKCINCTICEAVCPFFTMSNNSW). [4Fe-4S] cluster-binding residues include Cys-437, Cys-440, Cys-443, Cys-447, Cys-480, Cys-483, Cys-486, and Cys-490.

Belongs to the PceA family. [4Fe-4S] cluster serves as cofactor. The cofactor is corrinoid. In terms of processing, predicted to be exported by the Tat system. The position of the signal peptide cleavage has been experimentally proven.

It is found in the cell membrane. It carries out the reaction trichloroethene + AH2 = (Z)-1,2-dichloroethene + chloride + A + H(+). The catalysed reaction is (Z)-1,2-dichloroethene + AH2 = chloroethene + chloride + A + H(+). It catalyses the reaction 1,1-dichloroethene + AH2 = chloroethene + chloride + A + H(+). Its activity is regulated as follows. Loses 93% of its activity upon incubation with 1-iodopropane and titanium(III) citrate in the dark. Subsequent exposure to light restores 80% of the original activity. Completely inhibited by 2 mM sodium sulfite or sodium dithionite, and by 1 mM cuprous chloride. In terms of biological role, catalyzes the reductive dechlorination of trichloroethene (TCE) to cis-1,2-dichloroethene (DCE) and of cis-1,2-dichloroethene to chloroethene. The substrate specificity is broad, and the enzyme can dehalogenate various substrates, including 1,1-dichloroethene (1,1-DCE), 1,2-dichloroethane and 1,2-dibromoethane. A variety of other haloalkanes and haloalkenes containing three to five carbon atoms are dehalogenated at lower rates. Trans-1,2-dichloroethene (trans-DCE) and chloroethene are degraded at rates which are approximately 2 orders of magnitude lower. Titanium(III) citrate and methyl viologen can be used as reductants. The chain is Trichloroethene reductive dehalogenase from Dehalococcoides mccartyi (strain ATCC BAA-2266 / KCTC 15142 / 195) (Dehalococcoides ethenogenes (strain 195)).